Reading from the N-terminus, the 304-residue chain is MSASTVLPVRDRLRIAIQKSGRLTEPARRLLTSCGLSWRQSRDKLFCYGESLPVDLLLVRDDDIPGLIAQGVCDLGIVGRNELDEQAASRRRNGLPVPYQTLRGLHFGQCRLMLAVPEEWEWQDISQLTGKRIATSYPAILADWLQTHHIAAQIVELSGSVEIAPRLGTADLICDLVSSGATLTAHQLKPVIQIMESQAVLAGMIRQPADARAGLLAMLLRRIDGMVNLRDSNLLMFRAFQEHLDALTRLLPDADPLVQLPDDGSGTLRVQTMCHGTITWQRLEELERAGAQGLMVLTVERSLA.

This sequence belongs to the ATP phosphoribosyltransferase family. Long subfamily. The cofactor is Mg(2+).

It is found in the cytoplasm. The catalysed reaction is 1-(5-phospho-beta-D-ribosyl)-ATP + diphosphate = 5-phospho-alpha-D-ribose 1-diphosphate + ATP. The protein operates within amino-acid biosynthesis; L-histidine biosynthesis; L-histidine from 5-phospho-alpha-D-ribose 1-diphosphate: step 1/9. With respect to regulation, feedback inhibited by histidine. Functionally, catalyzes the condensation of ATP and 5-phosphoribose 1-diphosphate to form N'-(5'-phosphoribosyl)-ATP (PR-ATP). Has a crucial role in the pathway because the rate of histidine biosynthesis seems to be controlled primarily by regulation of HisG enzymatic activity. This chain is ATP phosphoribosyltransferase, found in Xylella fastidiosa (strain M12).